The primary structure comprises 253 residues: uncharacterized protein (253 aa).

10-35 (ISGAASKRGIGRATAELFASHGARVA) contributes to the NADP(+) binding site. Residue Ser144 participates in substrate binding. Tyr159 serves as the catalytic Proton acceptor.

It belongs to the short-chain dehydrogenases/reductases (SDR) family.

This is an uncharacterized protein from Sinorhizobium fredii (strain NBRC 101917 / NGR234).